The sequence spans 593 residues: uncharacterized protein (593 aa).

This is an uncharacterized protein from Sinorhizobium fredii (strain NBRC 101917 / NGR234).